Consider the following 834-residue polypeptide: Translation factor GUF1 homolog, mitochondrial (834 aa).

The transit peptide at 1–66 (MKLCGVRGSG…RPLLAEPRRY (66 aa)) directs the protein to the mitochondrion. The tr-type G domain maps to 129–314 (ACIRNVSVVA…QIIDKVPPPR (186 aa)). Residues 138–145 (AHVDHGKT), 205–209 (DTPGH), and 259–262 (TKMD) each bind GTP. Positions 475-507 (ATGPPETASRTKPATAAETASSDDASGSSGSSV) are disordered. The segment covering 488 to 507 (ATAAETASSDDASGSSGSSV) has biased composition (low complexity).

It belongs to the TRAFAC class translation factor GTPase superfamily. Classic translation factor GTPase family. LepA subfamily.

The protein localises to the mitochondrion inner membrane. It catalyses the reaction GTP + H2O = GDP + phosphate + H(+). Functionally, promotes mitochondrial protein synthesis. May act as a fidelity factor of the translation reaction, by catalyzing a one-codon backward translocation of tRNAs on improperly translocated ribosomes. Binds to mitochondrial ribosomes in a GTP-dependent manner. The protein is Translation factor GUF1 homolog, mitochondrial of Leishmania major.